The sequence spans 748 residues: CCR4-NOT transcription complex subunit 10-B (748 aa).

The span at 1–16 (MAADKAGEQGAEKHEG) shows a compositional bias: basic and acidic residues. Disordered regions lie at residues 1–25 (MAAD…GISD), 483–524 (KQEN…PPSS), and 605–634 (VSLG…KQIP). Composition is skewed to polar residues over residues 487–509 (GSKA…VCSN) and 605–615 (VSLGVSSNEQE).

The protein belongs to the CNOT10 family. As to quaternary structure, component of the CCR4-NOT complex. cnot10 and cnot11 form a subcomplex docked to the cnot1 scaffold.

The protein resides in the cytoplasm. It is found in the nucleus. In terms of biological role, component of the CCR4-NOT complex which is one of the major cellular mRNA deadenylases and is linked to various cellular processes including bulk mRNA degradation, miRNA-mediated repression, translational repression during translational initiation and general transcription regulation. Additional complex functions may be a consequence of its influence on mRNA expression. Is not required for association of CNOT7 to the CCR4-NOT complex. This is CCR4-NOT transcription complex subunit 10-B (cnot10-b) from Xenopus laevis (African clawed frog).